The following is a 302-amino-acid chain: uncharacterized protein (302 aa).

This is an uncharacterized protein from Haemophilus influenzae (strain ATCC 51907 / DSM 11121 / KW20 / Rd).